Here is a 124-residue protein sequence, read N- to C-terminus: Small ribosomal subunit protein eS6 (124 aa).

This sequence belongs to the eukaryotic ribosomal protein eS6 family.

The protein is Small ribosomal subunit protein eS6 of Thermoplasma acidophilum (strain ATCC 25905 / DSM 1728 / JCM 9062 / NBRC 15155 / AMRC-C165).